The primary structure comprises 622 residues: Pentatricopeptide repeat-containing protein At5g06540 (622 aa).

PPR repeat units lie at residues 81–115, 116–150, 151–181, 182–212, 213–247, 248–282, 283–313, 314–348, 349–384, and 385–419; these read NLFV…RIWP, DNIT…GFQN, DVYV…MGFR, DVVS…MPHR, NLFT…GVVA, NETV…HMTV, NLIL…LPET, DSLS…GFIP, RDVT…GIEP, and RLEH…PNAP. The type E motif stretch occupies residues 420-495; the sequence is ILGALLGACK…PPGWSLIEID (76 aa). The segment at 496–527 is type E(+) motif; it reads GKINKFTMGDDQKHPEMGKIRRKWEEILGKIR. The interval 528 to 622 is type DYW motif; that stretch reads LIGYKGNTGD…NGVCSCRDYW (95 aa).

It belongs to the PPR family. PCMP-H subfamily.

In Arabidopsis thaliana (Mouse-ear cress), this protein is Pentatricopeptide repeat-containing protein At5g06540 (PCMP-H88).